Reading from the N-terminus, the 829-residue chain is Transmembrane protease serine 7 (829 aa).

The Cytoplasmic segment spans residues Met1–Lys62. The interval Ser26–Lys52 is disordered. The segment covering Pro32 to Lys52 has biased composition (basic residues). Residues Ile63–Leu83 form a helical; Signal-anchor for type II membrane protein membrane-spanning segment. Residues Tyr84–Leu829 are Extracellular-facing. The 129-residue stretch at Asp92–Arg220 folds into the SEA domain. 3 disulfide bridges follow: Cys233–Cys259, Cys285–Cys308, and Cys351–Cys382. CUB domains are found at residues Cys233 to Ile346 and Cys351 to Ser467. N-linked (GlcNAc...) asparagine glycans are attached at residues Asn401 and Asn465. LDL-receptor class A domains are found at residues Pro469–Val505, Phe503–Thr540, and Pro544–Gly581. Disulfide bonds link Cys470–Cys482, Cys477–Cys495, Cys489–Cys504, Cys511–Cys530, Cys524–Cys539, Cys545–Cys557, Cys552–Cys571, Cys565–Cys580, and Cys617–Cys633. The region spanning Ile592 to Pro826 is the Peptidase S1 domain. Active-site charge relay system residues include His632 and Asp680. Disulfide bonds link Cys716–Cys782, Cys748–Cys761, and Cys772–Cys802. The active-site Charge relay system is the Ser776.

Belongs to the peptidase S1 family. As to quaternary structure, forms a heterodimer with SERPINA5. In terms of processing, N-glycosylated. In terms of tissue distribution, expressed in brain, eye, testis, skin, epididymis and salivary gland with lower levels in heart, skeletal muscle, thymus, ovary, prostate and uterus.

The protein localises to the cell membrane. In terms of biological role, serine protease which preferentially hydrolyzes peptides with Arg at the P1 position. The protein is Transmembrane protease serine 7 (Tmprss7) of Mus musculus (Mouse).